Reading from the N-terminus, the 133-residue chain is UPF0047 protein Rv2556c (133 aa).

Belongs to the UPF0047 family.

This is UPF0047 protein Rv2556c from Mycobacterium tuberculosis (strain ATCC 25618 / H37Rv).